Consider the following 656-residue polypeptide: MSSRRRSSSRRSGEPSTVIYIPSSNEDTPADEEAEDSVFTSTRARSATEDLDRMEAGLSPYSVSSDAPSSFELVRETGGTGAAKKPSEKKRSSSRRQPQIAAGAPRGSPATPKAGKSPKVSRPPSVPSLPENGAGGGGDDNSSSGGSSSRTTSNSSRSTSPVAPGEPSAAEGDEFSFCDSDIEDFERECYRVSVADNLGFEPSVVAPQHVEYLKFVLQDFDVQHLRRLNECIPMPAFALTSLVDPVLNNVAPGERDLTRRIITHAVIINYYYVAQKKARHMVEAIRTTVRGDTVRRVAAQVNNQSRSGRAAALALHFLTSRKGVTDGQYATSLRRLDEELRHRGTPESPRLTEVYQTLRDYNVLFYTAHYTSRGALYLYRQNLQRLNENHRGMLRLLSVEEICEEHTLNDLAFLVGVELMITHFQRTIRVLRCYLQHQLQSISELCYLIYVQLPSLREDYAQLSDVIYWAVSQNYDYALYASTPALFDFLRVVRQQDAFICTDYVYCALRLLACPDRPIIGDTGGSSSSQRLVGEFMVRDPLLRDPRATHLRQKLITRDICVARLQAQPSSRHIPVEHTGVSSVTLLKIFSQVPPDEREEDTLREMALKAFMEANGNHPEQICRSPPPPLPPRDYPQRDERDRHRRDRRDSGEYCC.

Disordered stretches follow at residues 1-174 and 615-656; these read MSSR…EGDE and NGNH…EYCC. Over residues 46–55 the composition is skewed to basic and acidic residues; the sequence is SATEDLDRME. 2 stretches are compositionally biased toward low complexity: residues 59-70 and 140-160; these read SPYSVSSDAPSS and DNSSSGGSSSRTTSNSSRSTS. A compositionally biased stretch (pro residues) spans 625–634; that stretch reads SPPPPLPPRD. Positions 635–656 are enriched in basic and acidic residues; it reads YPQRDERDRHRRDRRDSGEYCC.

It belongs to the herpesviridae pp85 family. Phosphorylated.

It is found in the virion tegument. Its subcellular location is the host cytoplasm. The sequence is that of Phosphoprotein 85 (UL25) from Homo sapiens (Human).